Reading from the N-terminus, the 171-residue chain is 3-hydroxydecanoyl-[acyl-carrier-protein] dehydratase (171 aa).

His70 is a catalytic residue.

This sequence belongs to the thioester dehydratase family. FabA subfamily. In terms of assembly, homodimer.

The protein localises to the cytoplasm. It carries out the reaction a (3R)-hydroxyacyl-[ACP] = a (2E)-enoyl-[ACP] + H2O. It catalyses the reaction (3R)-hydroxydecanoyl-[ACP] = (2E)-decenoyl-[ACP] + H2O. The enzyme catalyses (2E)-decenoyl-[ACP] = (3Z)-decenoyl-[ACP]. It participates in lipid metabolism; fatty acid biosynthesis. Necessary for the introduction of cis unsaturation into fatty acids. Catalyzes the dehydration of (3R)-3-hydroxydecanoyl-ACP to E-(2)-decenoyl-ACP and then its isomerization to Z-(3)-decenoyl-ACP. Can catalyze the dehydratase reaction for beta-hydroxyacyl-ACPs with saturated chain lengths up to 16:0, being most active on intermediate chain length. The polypeptide is 3-hydroxydecanoyl-[acyl-carrier-protein] dehydratase (Nitrosococcus oceani (strain ATCC 19707 / BCRC 17464 / JCM 30415 / NCIMB 11848 / C-107)).